A 468-amino-acid polypeptide reads, in one-letter code: Glutamate--tRNA ligase (468 aa).

5-7 (RIA) is an L-glutamate binding site. Residues 8–18 (PSPTGDPHVGT) carry the 'HIGH' region motif. His-15 is an ATP binding site. Residues Glu-41, 187 to 191 (YHLAN), and Arg-205 contribute to the L-glutamate site. Residues Glu-208, Leu-236, 243–247 (KISKR), and Lys-246 each bind ATP. Positions 243-247 (KISKR) match the 'KMSKS' region motif. An interaction with tRNA region spans residues 432–447 (QPLRAALTGSLETPGL).

The protein belongs to the class-I aminoacyl-tRNA synthetase family. Glutamate--tRNA ligase type 1 subfamily. As to quaternary structure, monomer.

The protein localises to the cytoplasm. The catalysed reaction is tRNA(Glu) + L-glutamate + ATP = L-glutamyl-tRNA(Glu) + AMP + diphosphate. In the absence of bound tRNA, ATP is bound in a non-productive mode, and the enzyme cannot activate amino acids. Its function is as follows. Catalyzes the attachment of glutamate to tRNA(Glu) in a two-step reaction: glutamate is first activated by ATP to form Glu-AMP and then transferred to the acceptor end of tRNA(Glu). This Thermus thermophilus (strain ATCC 27634 / DSM 579 / HB8) protein is Glutamate--tRNA ligase.